The sequence spans 164 residues: MTEITFKGGPIHLKGQQINEGDFAPDFTVLDNDLNQVTLADYAGKKKLISVVPSIDTGVCDQQTRKFNSEASKEEGIVLTISADLPFAQKRWCASAGLDNVITLSDHRDLSFGENYGVVMEELRLLARAVFVLDADNKVVYKEIVSEGTDFPDFDAALAAYKNI.

The Thioredoxin domain maps to 18-163 (INEGDFAPDF…FDAALAAYKN (146 aa)). Cys-60 functions as the Cysteine sulfenic acid (-SOH) intermediate in the catalytic mechanism. An intrachain disulfide couples Cys-60 to Cys-93.

It belongs to the peroxiredoxin family. Tpx subfamily. Homodimer.

It carries out the reaction a hydroperoxide + [thioredoxin]-dithiol = an alcohol + [thioredoxin]-disulfide + H2O. Thiol-specific peroxidase that catalyzes the reduction of hydrogen peroxide and organic hydroperoxides to water and alcohols, respectively. Plays a role in cell protection against oxidative stress by detoxifying peroxides. The sequence is that of Thiol peroxidase from Staphylococcus aureus (strain MRSA252).